The following is a 360-amino-acid chain: MKPSIVAKLEALQERHEEVQALLGDAGTLADQERFRALSREYAQLSDVSRCFLEWRQVQEDMETARLMLSDPEMRDMAQDELLEAKAKSEALEQELQLLLLPKDPDDERNAFVEVRAGTGGDEAALFAGDLFRMYSRYAESRRWRVEIMSASEGEHGGYKEVIAKISGEGVYGRLKFESGGHRVQRVPATESQGRIHTSACTVAVMPELPEAELPDINPADLRIDTFRSSGAGGQHVNTTDSAIRITHLPTGIVVECQDERSQHKNKAKALAVLGARIHAAEVAKRQQAEASTRRNLLGSGDRSDRNRTYNFPQGRVTDHRINLTLYRLDEVMEGKLDALIEPIIQEHQADQLAALAEQE.

Gln235 carries the N5-methylglutamine modification. A disordered region spans residues 286 to 313 (RQQAEASTRRNLLGSGDRSDRNRTYNFP).

It belongs to the prokaryotic/mitochondrial release factor family. Methylated by PrmC. Methylation increases the termination efficiency of RF1.

It is found in the cytoplasm. Its function is as follows. Peptide chain release factor 1 directs the termination of translation in response to the peptide chain termination codons UAG and UAA. This Cronobacter sakazakii (strain ATCC BAA-894) (Enterobacter sakazakii) protein is Peptide chain release factor 1.